A 1295-amino-acid chain; its full sequence is Phosphoribosylformylglycinamidine synthase (1295 aa).

The interval 305–327 (WPGAATGSGGEIRDEGATGRGAK) is disordered. ATP contacts are provided by residues 307 to 318 (GAATGSGGEIRD) and Ala-678. Mg(2+) contacts are provided by Glu-718, Asn-722, and Asp-884. ATP is bound at residue Ser-886. In terms of domain architecture, Glutamine amidotransferase type-1 spans 1042–1295 (VAVLREQGVN…IFRNARKQLG (254 aa)). Residue Cys-1135 is the Nucleophile of the active site. Catalysis depends on residues His-1260 and Glu-1262.

This sequence in the N-terminal section; belongs to the FGAMS family. Monomer.

The protein resides in the cytoplasm. The enzyme catalyses N(2)-formyl-N(1)-(5-phospho-beta-D-ribosyl)glycinamide + L-glutamine + ATP + H2O = 2-formamido-N(1)-(5-O-phospho-beta-D-ribosyl)acetamidine + L-glutamate + ADP + phosphate + H(+). Its pathway is purine metabolism; IMP biosynthesis via de novo pathway; 5-amino-1-(5-phospho-D-ribosyl)imidazole from N(2)-formyl-N(1)-(5-phospho-D-ribosyl)glycinamide: step 1/2. Phosphoribosylformylglycinamidine synthase involved in the purines biosynthetic pathway. Catalyzes the ATP-dependent conversion of formylglycinamide ribonucleotide (FGAR) and glutamine to yield formylglycinamidine ribonucleotide (FGAM) and glutamate. In Shigella boydii serotype 4 (strain Sb227), this protein is Phosphoribosylformylglycinamidine synthase.